The chain runs to 265 residues: Small ribosomal subunit protein uS3 (265 aa).

The region spanning 43 to 111 (IRTMLKTSLD…QIQLNILEVK (69 aa)) is the KH type-2 domain. The disordered stretch occupies residues 217 to 265 (AREQANQKSSRPERRNDRSDGRTGDRRTNAPRTAPAAEAAPVAAAGVEA). Residues 226–244 (SRPERRNDRSDGRTGDRRT) are compositionally biased toward basic and acidic residues. Over residues 250–265 (APAAEAAPVAAAGVEA) the composition is skewed to low complexity.

Belongs to the universal ribosomal protein uS3 family. Part of the 30S ribosomal subunit. Forms a tight complex with proteins S10 and S14.

In terms of biological role, binds the lower part of the 30S subunit head. Binds mRNA in the 70S ribosome, positioning it for translation. The protein is Small ribosomal subunit protein uS3 of Clavibacter michiganensis subsp. michiganensis (strain NCPPB 382).